Reading from the N-terminus, the 198-residue chain is Transcription factor LBX2 (198 aa).

Disordered stretches follow at residues 24-46 (MVPRAPSAPQLPESGPGPTSPLC), 63-89 (ALQPSEGRAGPDALGPGPFGRKRRKSR), and 173-198 (DPGLCLGPAGPDSRPHLSDEEIQVDD). The homeobox DNA-binding region spans 85–144 (RRKSRTAFTAQQVLELERRFVFQKYLAPSERDGLATRLGLANAQVVTWFQNRRAKLKRDV).

The protein localises to the nucleus. Its function is as follows. Transcription factor. The protein is Transcription factor LBX2 (LBX2) of Homo sapiens (Human).